The following is a 906-amino-acid chain: Probable disease resistance RPP8-like protein 2 (906 aa).

A coiled-coil region spans residues 15-68 (ELLSRESARLNGIDEQVDGLKRQLGRLQSLLKDADAKKNETERVRNFLEDVKDI). The 311-residue stretch at 144–454 (LQERQREIRQ…AEGIITPFHD (311 aa)) folds into the NB-ARC domain. 190-197 (GMGGIGKT) contacts ATP. LRR repeat units follow at residues 573–597 (LPLLRVLDLSYVQFEGGKLPSSIGD), 598–621 (LIHLRFLSLYEAGVSHLPSSLGNL), 623–644 (LLLCLNLGVADRLLVHVPNVLK), 646–671 (MQELRYLRLPRSMPAKTKLELGDLVN), 672–696 (LESLTNFSTKHGSVTDLLRMTKLSV), 704–727 (ECTFETLLLSLRELRNLETLSFHD), 740–766 (LLVLDFIHLKDLTLSMHLPRFPDQYRF), 767–790 (PPHLAHIWLIGCRMEEDPMPILEK), 791–818 (LLHLKSVYLSSGAFLGRRMVCSKGGFPQ), and 840–865 (MPCLRTLTIDNCKKLKQLPDGLKYVT).

Belongs to the disease resistance NB-LRR family. RPP8/HRT subfamily.

In terms of biological role, potential disease resistance protein. This is Probable disease resistance RPP8-like protein 2 (RPP8L2) from Arabidopsis thaliana (Mouse-ear cress).